The following is a 299-amino-acid chain: Pyridoxal 5'-phosphate synthase subunit PdxS (299 aa).

Position 24 (Asp24) interacts with D-ribose 5-phosphate. Lys81 functions as the Schiff-base intermediate with D-ribose 5-phosphate in the catalytic mechanism. A D-ribose 5-phosphate-binding site is contributed by Gly153. Arg165 contacts D-glyceraldehyde 3-phosphate. D-ribose 5-phosphate is bound by residues Gly219 and 240–241 (GS).

Belongs to the PdxS/SNZ family. As to quaternary structure, in the presence of PdxT, forms a dodecamer of heterodimers.

It catalyses the reaction aldehydo-D-ribose 5-phosphate + D-glyceraldehyde 3-phosphate + L-glutamine = pyridoxal 5'-phosphate + L-glutamate + phosphate + 3 H2O + H(+). It participates in cofactor biosynthesis; pyridoxal 5'-phosphate biosynthesis. Its function is as follows. Catalyzes the formation of pyridoxal 5'-phosphate from ribose 5-phosphate (RBP), glyceraldehyde 3-phosphate (G3P) and ammonia. The ammonia is provided by the PdxT subunit. Can also use ribulose 5-phosphate and dihydroxyacetone phosphate as substrates, resulting from enzyme-catalyzed isomerization of RBP and G3P, respectively. In Methanococcus maripaludis (strain C6 / ATCC BAA-1332), this protein is Pyridoxal 5'-phosphate synthase subunit PdxS.